Reading from the N-terminus, the 194-residue chain is MIHNEEEQLEKKIEKNQDPKINHKKYDSDNLIKKNLIQFLEIQLKESEEKIIEKEEIVEKEIVLIHNRFNKEIEKSIKFSLEKIIIDFLPIIDNIERALNLIETINLKQEKYTEILKKLQFICNLLEKFFYLFNIKKINDTNVLFNPSIHQAMSIHYTNDIISNQIVTVMQSGYILHKSRLLRPAMVVVSKEKI.

Residues 1 to 22 are disordered; sequence MIHNEEEQLEKKIEKNQDPKIN.

It belongs to the GrpE family. Homodimer.

It localises to the cytoplasm. Its function is as follows. Participates actively in the response to hyperosmotic and heat shock by preventing the aggregation of stress-denatured proteins, in association with DnaK and GrpE. It is the nucleotide exchange factor for DnaK and may function as a thermosensor. Unfolded proteins bind initially to DnaJ; upon interaction with the DnaJ-bound protein, DnaK hydrolyzes its bound ATP, resulting in the formation of a stable complex. GrpE releases ADP from DnaK; ATP binding to DnaK triggers the release of the substrate protein, thus completing the reaction cycle. Several rounds of ATP-dependent interactions between DnaJ, DnaK and GrpE are required for fully efficient folding. The sequence is that of Protein GrpE 1 from Buchnera aphidicola subsp. Acyrthosiphon pisum (strain APS) (Acyrthosiphon pisum symbiotic bacterium).